Reading from the N-terminus, the 546-residue chain is Immunoglobulin-like domain-containing receptor 1 (546 aa).

The first 23 residues, 1 to 23, serve as a signal peptide directing secretion; sequence MAWPKLPAPWLLLCTWLPAGCLS. The region spanning 24–162 is the Ig-like V-type domain; the sequence is LLVTVQHTER…TSGDPDKEVK (139 aa). Residues 24 to 167 are Extracellular-facing; it reads LLVTVQHTER…DKEVKLIVLH (144 aa). Cysteine 45 and cysteine 145 form a disulfide bridge. Residues 168-188 traverse the membrane as a helical segment; that stretch reads WLTVIFIILGALLLLLLIGVC. At 189 to 546 the chain is on the cytoplasmic side; the sequence is WCQCCPQYCC…SSHSGRSVVI (358 aa). The tract at residues 399 to 546 is disordered; it reads WSGRHRSSRL…SSHSGRSVVI (148 aa). Basic and acidic residues predominate over residues 442–457; sequence RCQERPRRPSPRESTQ. Basic residues predominate over residues 458–467; sequence RHGRRRRHRS. A phosphoserine mark is found at serine 499 and serine 501. A compositionally biased stretch (basic and acidic residues) spans 527–539; the sequence is GSVERRSEKDSSH.

It belongs to the immunoglobulin superfamily. LISCH7 family. Homooligomer. Interacts with MARVELD2 and OCLN; the interaction is required to recruit MARVELD2 to tricellular contacts. Interacts (via C-terminus) with TRA2A, TRA2B and SRSF1. Interacts with PLSCR1.

It is found in the cell membrane. The protein localises to the cell junction. It localises to the tight junction. Its subcellular location is the nucleus. The protein resides in the cytoplasm. Its function is as follows. Maintains epithelial barrier function by recruiting MARVELD2/tricellulin to tricellular tight junctions (tTJs). Crucial for normal hearing by maintaining the structural and functional integrity of tTJs, which are critical for the survival of auditory neurosensory HCs. Mediates fatty acids and lipoproteins-stimulated CCK/cholecystokinin secretion in the small intestine. In the inner ear, may regulate alternative pre-mRNA splicing via binding to TRA2A, TRA2B and SRSF1. The chain is Immunoglobulin-like domain-containing receptor 1 (ILDR1) from Pongo abelii (Sumatran orangutan).